A 296-amino-acid chain; its full sequence is Diaminopimelate epimerase (296 aa).

The substrate site is built by asparagine 17, glutamine 49, and asparagine 69. Residue cysteine 78 is the Proton donor of the active site. Substrate contacts are provided by residues 79–80 (GN), asparagine 171, asparagine 205, and 223–224 (ER). Cysteine 232 serves as the catalytic Proton acceptor. 233-234 (GT) provides a ligand contact to substrate.

This sequence belongs to the diaminopimelate epimerase family. Homodimer.

It is found in the cytoplasm. It catalyses the reaction (2S,6S)-2,6-diaminopimelate = meso-2,6-diaminopimelate. It functions in the pathway amino-acid biosynthesis; L-lysine biosynthesis via DAP pathway; DL-2,6-diaminopimelate from LL-2,6-diaminopimelate: step 1/1. In terms of biological role, catalyzes the stereoinversion of LL-2,6-diaminopimelate (L,L-DAP) to meso-diaminopimelate (meso-DAP), a precursor of L-lysine and an essential component of the bacterial peptidoglycan. In Methylorubrum populi (strain ATCC BAA-705 / NCIMB 13946 / BJ001) (Methylobacterium populi), this protein is Diaminopimelate epimerase.